Consider the following 156-residue polypeptide: Oleosin Zm-I (156 aa).

The tract at residues 1-30 (MADHHRGATGGGGGYGDLQRGGGMHGEAQQ) is disordered. Ala-2 is modified (N-acetylalanine). The interval 2–42 (ADHHRGATGGGGGYGDLQRGGGMHGEAQQQQKQGAMMTALK) is polar. Residues 8-25 (ATGGGGGYGDLQRGGGMH) show a composition bias toward gly residues. Residues 43 to 114 (AATAATFGGS…AALSVFSWMY (72 aa)) form a hydrophobic region. The next 2 helical transmembrane spans lie at 51–71 (GSML…LTVA) and 95–115 (GFVT…WMYK).

The protein belongs to the oleosin family. In terms of processing, the N-terminus is blocked.

It localises to the lipid droplet. The protein localises to the membrane. In terms of biological role, may have a structural role to stabilize the lipid body during desiccation of the seed by preventing coalescence of the oil. Probably interacts with both lipid and phospholipid moieties of lipid bodies. May also provide recognition signals for specific lipase anchorage in lipolysis during seedling growth. The protein is Oleosin Zm-I (OLE16) of Zea mays (Maize).